We begin with the raw amino-acid sequence, 405 residues long: Arrestin red cell isoform 2 (405 aa).

It belongs to the arrestin family.

The protein localises to the cytoplasm. This Oncorhynchus mykiss (Rainbow trout) protein is Arrestin red cell isoform 2.